The chain runs to 304 residues: CBY1-interacting BAR domain-containing protein 2 (304 aa).

A BAR-like region spans residues 6-217 (SRDSQVRVME…EKYDLERDLL (212 aa)).

Belongs to the CIBAR family. As to quaternary structure, homodimer (via BAR-like domain). Heterodimer (via BAR-like domain) with FAM92A. Interacts with CBY1. Restricted to certain tissues, most prominently expressed in multicilaited tissues.

Its subcellular location is the cytoplasm. It localises to the cytoskeleton. It is found in the microtubule organizing center. The protein resides in the centrosome. The protein localises to the centriole. Its subcellular location is the cilium basal body. Functionally, may play a role in ciliogenesis. In cooperation with CBY1 may facilitate ciliogenesis likely by the recruitment and fusion of endosomal vesicles at distal appendages during early stages of ciliogenesis. This chain is CBY1-interacting BAR domain-containing protein 2, found in Homo sapiens (Human).